The sequence spans 239 residues: 1-(5-phosphoribosyl)-5-[(5-phosphoribosylamino)methylideneamino] imidazole-4-carboxamide isomerase (239 aa).

Aspartate 8 acts as the Proton acceptor in catalysis. The active-site Proton donor is aspartate 129.

The protein belongs to the HisA/HisF family.

It localises to the cytoplasm. It catalyses the reaction 1-(5-phospho-beta-D-ribosyl)-5-[(5-phospho-beta-D-ribosylamino)methylideneamino]imidazole-4-carboxamide = 5-[(5-phospho-1-deoxy-D-ribulos-1-ylimino)methylamino]-1-(5-phospho-beta-D-ribosyl)imidazole-4-carboxamide. The protein operates within amino-acid biosynthesis; L-histidine biosynthesis; L-histidine from 5-phospho-alpha-D-ribose 1-diphosphate: step 4/9. The sequence is that of 1-(5-phosphoribosyl)-5-[(5-phosphoribosylamino)methylideneamino] imidazole-4-carboxamide isomerase from Roseobacter denitrificans (strain ATCC 33942 / OCh 114) (Erythrobacter sp. (strain OCh 114)).